Consider the following 64-residue polypeptide: Photosystem II reaction center protein J (64 aa).

The helical transmembrane segment at 35–55 threads the bilayer; that stretch reads LWLVATAGGIAVIFVLGIFFY.

It belongs to the PsbJ family. PSII is composed of 1 copy each of membrane proteins PsbA, PsbB, PsbC, PsbD, PsbE, PsbF, PsbH, PsbI, PsbJ, PsbK, PsbL, PsbM, PsbT, PsbX, PsbY, Psb30/Ycf12, peripheral proteins PsbO, CyanoQ (PsbQ), PsbU, PsbV and a large number of cofactors. It forms dimeric complexes.

The protein resides in the cellular thylakoid membrane. Its function is as follows. One of the components of the core complex of photosystem II (PSII). PSII is a light-driven water:plastoquinone oxidoreductase that uses light energy to abstract electrons from H(2)O, generating O(2) and a proton gradient subsequently used for ATP formation. It consists of a core antenna complex that captures photons, and an electron transfer chain that converts photonic excitation into a charge separation. This is Photosystem II reaction center protein J from Prochlorococcus marinus (strain MIT 9515).